The following is a 465-amino-acid chain: Putative F-box/LRR-repeat protein At3g28410 (465 aa).

The 47-residue stretch at 27–73 (ADFINYMPDDILHHILSFIPTDLAMRTSVLSRRWRHVWCETPCLDIK) folds into the F-box domain. 7 LRR repeats span residues 127 to 155 (VRDF…DVTL), 178 to 203 (FCQI…TLDT), 207 to 225 (LERL…DINR), 278 to 302 (ADRY…TVGE), 332 to 357 (FVRS…TLHT), 402 to 427 (TSKL…VVWL), and 447 to 465 (VETL…QSNC).

This chain is Putative F-box/LRR-repeat protein At3g28410, found in Arabidopsis thaliana (Mouse-ear cress).